We begin with the raw amino-acid sequence, 463 residues long: Endoglucanase EG-1 (463 aa).

Residues 1–22 (MAPSATLPLTTAILAIGRLVAA) form the signal peptide. The segment at 23–397 (QQPGTSTPEV…DIGSTTNSTG (375 aa)) is catalytic. 4 N-linked (GlcNAc...) asparagine glycosylation sites follow: Asn-78, Asn-164, Asn-204, and Asn-208. The active-site Nucleophile is the Glu-218. The Proton donor role is filled by Glu-223. The disordered stretch occupies residues 390-429 (GSTTNSTGGNPPPPPPPASSTTFSTTRRSSTTSSSPSCTQ). A glycan (N-linked (GlcNAc...) asparagine) is linked at Asn-394. The linker stretch occupies residues 402 to 427 (PPPPPASSTTFSTTRRSSTTSSSPSC). A compositionally biased stretch (low complexity) spans 408–429 (SSTTFSTTRRSSTTSSSPSCTQ). Residues 427–463 (CTQTHWGQCGGIGYTGCKTCTSGTTCQYGNDYYSQCL) form the CBM1 domain. Intrachain disulfides connect Cys-435/Cys-452 and Cys-446/Cys-462.

It belongs to the glycosyl hydrolase 7 (cellulase C) family.

The protein localises to the secreted. The catalysed reaction is Endohydrolysis of (1-&gt;4)-beta-D-glucosidic linkages in cellulose, lichenin and cereal beta-D-glucans.. In terms of biological role, the biological conversion of cellulose to glucose generally requires three types of hydrolytic enzymes: (1) Endoglucanases which cut internal beta-1,4-glucosidic bonds; (2) Exocellobiohydrolases that cut the disaccharide cellobiose from the non-reducing end of the cellulose polymer chain; (3) Beta-1,4-glucosidases which hydrolyze the cellobiose and other short cello-oligosaccharides to glucose. The sequence is that of Endoglucanase EG-1 (egl1) from Trichoderma longibrachiatum.